The following is a 67-amino-acid chain: ATP synthase protein 8 (67 aa).

The chain crosses the membrane as a helical span at residues Thr-8–Phe-24. At Lys-54 the chain carries N6-acetyllysine; alternate. An N6-succinyllysine; alternate modification is found at Lys-54. Lys-57 carries the post-translational modification N6-acetyllysine.

It belongs to the ATPase protein 8 family. In terms of assembly, F-type ATPases have 2 components, CF(1) - the catalytic core - and CF(0) - the membrane proton channel. Component of an ATP synthase complex composed of ATP5PB, ATP5MC1, ATP5F1E, ATP5PD, ATP5ME, ATP5PF, ATP5MF, MT-ATP6, MT-ATP8, ATP5F1A, ATP5F1B, ATP5F1D, ATP5F1C, ATP5PO, ATP5MG, ATP5MK and ATP5MJ. Interacts with PRICKLE3.

The protein localises to the mitochondrion membrane. In terms of biological role, mitochondrial membrane ATP synthase (F(1)F(0) ATP synthase or Complex V) produces ATP from ADP in the presence of a proton gradient across the membrane which is generated by electron transport complexes of the respiratory chain. F-type ATPases consist of two structural domains, F(1) - containing the extramembraneous catalytic core and F(0) - containing the membrane proton channel, linked together by a central stalk and a peripheral stalk. During catalysis, ATP synthesis in the catalytic domain of F(1) is coupled via a rotary mechanism of the central stalk subunits to proton translocation. Part of the complex F(0) domain. Minor subunit located with subunit a in the membrane. This chain is ATP synthase protein 8 (MT-ATP8), found in Felis silvestris lybica (African wildcat).